An 853-amino-acid chain; its full sequence is DNA mismatch repair protein MutS (853 aa).

Position 614-621 (614-621 (GPNMGGKS)) interacts with ATP.

It belongs to the DNA mismatch repair MutS family.

Functionally, this protein is involved in the repair of mismatches in DNA. It is possible that it carries out the mismatch recognition step. This protein has a weak ATPase activity. The polypeptide is DNA mismatch repair protein MutS (Escherichia coli (strain SE11)).